The sequence spans 231 residues: Putative N-acetylmannosamine-6-phosphate 2-epimerase (231 aa).

The protein belongs to the NanE family.

It catalyses the reaction an N-acyl-D-glucosamine 6-phosphate = an N-acyl-D-mannosamine 6-phosphate. The protein operates within amino-sugar metabolism; N-acetylneuraminate degradation; D-fructose 6-phosphate from N-acetylneuraminate: step 3/5. Functionally, converts N-acetylmannosamine-6-phosphate (ManNAc-6-P) to N-acetylglucosamine-6-phosphate (GlcNAc-6-P). This chain is Putative N-acetylmannosamine-6-phosphate 2-epimerase, found in Latilactobacillus sakei subsp. sakei (strain 23K) (Lactobacillus sakei subsp. sakei).